The sequence spans 176 residues: uncharacterized protein (176 aa).

A compositionally biased stretch (low complexity) spans alanine 87–serine 100. The interval alanine 87 to glycine 109 is disordered.

This is an uncharacterized protein from Homo sapiens (Human).